The chain runs to 493 residues: Stage V sporulation protein AF (493 aa).

The next 5 membrane-spanning stretches (helical) occupy residues 296–316 (FFGI…VLQP), 334–354 (IPII…RMAA), 363–383 (TAMG…VGLF), 387–407 (VILY…YELS), and 418–438 (MILV…VLII).

Belongs to the GerABKA family.

Its subcellular location is the cell membrane. This Bacillus subtilis (strain 168) protein is Stage V sporulation protein AF (spoVAF).